Here is a 543-residue protein sequence, read N- to C-terminus: CTP synthase (543 aa).

The segment at 1-265 (MTRYVFITGG…DREVLRHFGL (265 aa)) is amidoligase domain. A CTP-binding site is contributed by S13. S13 contacts UTP. 14-19 (SLGKGI) contributes to the ATP binding site. Y54 lines the L-glutamine pocket. An ATP-binding site is contributed by D71. 2 residues coordinate Mg(2+): D71 and E139. CTP contacts are provided by residues 146 to 148 (DIE), 186 to 191 (KTKPTQ), and K222. UTP-binding positions include 186 to 191 (KTKPTQ) and K222. V240 contacts ATP. The region spanning 291 to 542 (TIAVVGKYTN…IEAAVKQMRL (252 aa)) is the Glutamine amidotransferase type-1 domain. L-glutamine is bound at residue G353. The Nucleophile; for glutamine hydrolysis role is filled by C380. L-glutamine is bound by residues 381-384 (FGMQ), E404, and R470. Active-site residues include H515 and E517.

Belongs to the CTP synthase family. Homotetramer.

The catalysed reaction is UTP + L-glutamine + ATP + H2O = CTP + L-glutamate + ADP + phosphate + 2 H(+). It catalyses the reaction L-glutamine + H2O = L-glutamate + NH4(+). It carries out the reaction UTP + NH4(+) + ATP = CTP + ADP + phosphate + 2 H(+). It functions in the pathway pyrimidine metabolism; CTP biosynthesis via de novo pathway; CTP from UDP: step 2/2. With respect to regulation, allosterically activated by GTP, when glutamine is the substrate; GTP has no effect on the reaction when ammonia is the substrate. The allosteric effector GTP functions by stabilizing the protein conformation that binds the tetrahedral intermediate(s) formed during glutamine hydrolysis. Inhibited by the product CTP, via allosteric rather than competitive inhibition. Catalyzes the ATP-dependent amination of UTP to CTP with either L-glutamine or ammonia as the source of nitrogen. Regulates intracellular CTP levels through interactions with the four ribonucleotide triphosphates. In Acidiphilium cryptum (strain JF-5), this protein is CTP synthase.